The chain runs to 1723 residues: Lymphocyte antigen 75 (1723 aa).

An N-terminal signal peptide occupies residues 1 to 27 (MRTGRVTPGLAAGLLLLLLRSFGLVEP). Residues 28-1667 (SESSGNDPFT…AVCKIPLSPD (1640 aa)) lie on the Extracellular side of the membrane. Residues 33-182 (NDPFTIVHEN…FLIGETWYHD (150 aa)) form the Ricin B-type lectin domain. N-linked (GlcNAc...) asparagine glycosylation occurs at N135. One can recognise a Fibronectin type-II domain in the interval 164–211 (SYGRPCEFPFLIGETWYHDCIHDEDHSGPWCATTLSYEYDQKWGICLL). 4 disulfide bridges follow: C169–C194, C183–C209, C247–C340, and C317–C332. Positions 225–341 (QIGSCYQFNN…CESQQPYVCK (117 aa)) constitute a C-type lectin 1 domain. N-linked (GlcNAc...) asparagine glycosylation is found at N345 and N377. C-type lectin domains lie at 368 to 486 (NNGF…YVCK), 493 to 625 (KDAE…ICKK), and 652 to 791 (SSLS…WVCQ). 2 disulfide bridges follow: C389-C485 and C462-C477. The N-linked (GlcNAc...) asparagine glycan is linked to N529. 3 cysteine pairs are disulfide-bonded: C597–C614, C678–C790, and C752–C782. N-linked (GlcNAc...) asparagine glycosylation is found at N843 and N865. Y934 carries the post-translational modification Phosphotyrosine. Residues N935, N1077, and N1104 are each glycosylated (N-linked (GlcNAc...) asparagine). A C-type lectin 5 domain is found at 959 to 1092 (FQNKCFLKVN…ERHSLSLCQK (134 aa)). C1061 and C1081 are joined by a disulfide. The region spanning 1111-1223 (YLNNLYKIIS…DNQPGAICYY (113 aa)) is the C-type lectin 6 domain. An intrachain disulfide couples C1198 to C1212. Residues N1226, N1321, and N1393 are each glycosylated (N-linked (GlcNAc...) asparagine). The 124-residue stretch at 1252 to 1375 (FQNSCYNFMI…VIEETLHFYQ (124 aa)) folds into the C-type lectin 7 domain. 2 C-type lectin domains span residues 1402–1514 (YKDG…ICYK) and 1543–1662 (YGGH…VCKI). A disulfide bridge links C1489 with C1503. N-linked (GlcNAc...) asparagine glycans are attached at residues N1594 and N1627. A disulfide bond links C1636 and C1651. The chain crosses the membrane as a helical span at residues 1668 to 1692 (YTGIAILFAVLCLLGLISLAIWFLL). The Cytoplasmic segment spans residues 1693 to 1723 (QRSHIRWTGFSSVRYEHGTNEDEVMLPSFHD). Residues S1704 and S1720 each carry the phosphoserine modification.

N-glycosylated. Expressed in dendritic and thymic epithelial cells and lymph nodes.

It localises to the membrane. In terms of biological role, acts as an endocytic receptor to direct captured antigens from the extracellular space to a specialized antigen-processing compartment. Causes reduced proliferation of B lymphocytes. The sequence is that of Lymphocyte antigen 75 (Ly75) from Mus musculus (Mouse).